We begin with the raw amino-acid sequence, 98 residues long: uncharacterized protein (98 aa).

A signal peptide spans Met-1 to Leu-19. Residues Pro-40 to Pro-98 form a disordered region. Basic residues predominate over residues Leu-87–Pro-98.

This is an uncharacterized protein from Homo sapiens (Human).